A 134-amino-acid polypeptide reads, in one-letter code: Profilin-4 (134 aa).

C13 and C118 are oxidised to a cystine. The short motif at 84-100 (AVIRGKKGSGGITIKKT) is the Involved in PIP2 interaction element. T114 carries the post-translational modification Phosphothreonine.

The protein belongs to the profilin family. Occurs in many kinds of cells as a complex with monomeric actin in a 1:1 ratio. In terms of processing, phosphorylated by MAP kinases.

Its subcellular location is the cytoplasm. It localises to the cytoskeleton. Functionally, binds to actin and affects the structure of the cytoskeleton. At high concentrations, profilin prevents the polymerization of actin, whereas it enhances it at low concentrations. The protein is Profilin-4 of Olea europaea (Common olive).